A 230-amino-acid chain; its full sequence is MKFFALTTFLAATASALPTSNPAQELEARQLGRTTRDDLINGNSASCADVIFIYARGSTETGNLGTLGPSIASNLESAFGTDGVWIQGVGGAYRATLGDNALPRGTSSAAIREMLGLFQQANTKCPDATLIAGGYSQGAALAAASIEDLDSAIRDKIAGTVLFGYTKNLQNRGRIPNYPADRTKVFCNVGDLVCTGSLIVAAPHLAYGPDARGPAPEFLIEKVRAVRGSA.

Residues 1 to 16 (MKFFALTTFLAATASA) form the signal peptide. A disulfide bond links C47 and C125. Residue S136 is the Nucleophile of the active site. A disulfide bond links C187 and C194. Residue D191 is part of the active site. H204 serves as the catalytic Proton donor/acceptor.

It belongs to the cutinase family. The 2 disulfide bonds play a critical role in holding the catalytic residues in juxta-position; reduction of the disulfide bridges results in the complete inactivation of the enzyme.

Its subcellular location is the secreted. It carries out the reaction cutin + H2O = cutin monomers.. In terms of biological role, catalyzes the hydrolysis of complex carboxylic polyesters found in the cell wall of plants. Degrades cutin, a macromolecule that forms the structure of the plant cuticle. Allows pathogenic fungi to penetrate through the cuticular barrier into the host plant during the initial stage of fungal infection. This Fusarium solani subsp. cucurbitae (Neocosmosporum cucurbitae) protein is Cutinase (CUTA).